A 78-amino-acid polypeptide reads, in one-letter code: D-alanyl carrier protein (78 aa).

A Carrier domain is found at 1–78 (MDFKQEVLDV…NIVNQLSELK (78 aa)). Ser36 carries the O-(pantetheine 4'-phosphoryl)serine modification.

It belongs to the DltC family. 4'-phosphopantetheine is transferred from CoA to a specific serine of apo-DCP.

It localises to the cytoplasm. Its pathway is cell wall biogenesis; lipoteichoic acid biosynthesis. Functionally, carrier protein involved in the D-alanylation of lipoteichoic acid (LTA). The loading of thioester-linked D-alanine onto DltC is catalyzed by D-alanine--D-alanyl carrier protein ligase DltA. The DltC-carried D-alanyl group is further transferred to cell membrane phosphatidylglycerol (PG) by forming an ester bond, probably catalyzed by DltD. D-alanylation of LTA plays an important role in modulating the properties of the cell wall in Gram-positive bacteria, influencing the net charge of the cell wall. In Bacillus subtilis (strain 168), this protein is D-alanyl carrier protein.